We begin with the raw amino-acid sequence, 215 residues long: Probable GTP-binding protein EngB (215 aa).

The region spanning 26 to 200 (EGIEVAFAGR…RAKLDEWFAP (175 aa)) is the EngB-type G domain. Residues 34–41 (GRSNAGKS), 61–65 (GRTQL), 79–82 (DLPG), 146–149 (TKAD), and 179–181 (FSS) contribute to the GTP site. Residues Ser-41 and Thr-63 each coordinate Mg(2+).

The protein belongs to the TRAFAC class TrmE-Era-EngA-EngB-Septin-like GTPase superfamily. EngB GTPase family. Mg(2+) is required as a cofactor.

In terms of biological role, necessary for normal cell division and for the maintenance of normal septation. This Aliivibrio fischeri (strain MJ11) (Vibrio fischeri) protein is Probable GTP-binding protein EngB.